The chain runs to 294 residues: Enoyl-CoA hydratase domain-containing protein 3, mitochondrial (294 aa).

A mitochondrion-targeting transit peptide spans 1–61 (MSWLRSCGER…IILNNPQQRN (61 aa)).

The protein belongs to the enoyl-CoA hydratase/isomerase family.

The protein localises to the mitochondrion. May play a role in fatty acid biosynthesis and insulin sensitivity. The polypeptide is Enoyl-CoA hydratase domain-containing protein 3, mitochondrial (echdc3) (Xenopus laevis (African clawed frog)).